The sequence spans 338 residues: Holliday junction branch migration complex subunit RuvB (338 aa).

Positions 1 to 182 are large ATPase domain (RuvB-L); the sequence is MDDRMVDQSQ…FGVHLRLEYY (182 aa). ATP contacts are provided by residues Leu21, Arg22, Gly63, Lys66, Thr67, Thr68, 129–131, Arg172, Tyr182, and Arg219; that span reads EDF. Thr67 contacts Mg(2+). The interval 183–253 is small ATPAse domain (RuvB-S); the sequence is KESELKDIII…TTKRALQLLQ (71 aa). The tract at residues 256 to 338 is head domain (RuvB-H); the sequence is DYGLDYIDHK…KNGKRDNFEY (83 aa). Arg292, Arg311, and Arg316 together coordinate DNA.

The protein belongs to the RuvB family. Homohexamer. Forms an RuvA(8)-RuvB(12)-Holliday junction (HJ) complex. HJ DNA is sandwiched between 2 RuvA tetramers; dsDNA enters through RuvA and exits via RuvB. An RuvB hexamer assembles on each DNA strand where it exits the tetramer. Each RuvB hexamer is contacted by two RuvA subunits (via domain III) on 2 adjacent RuvB subunits; this complex drives branch migration. In the full resolvosome a probable DNA-RuvA(4)-RuvB(12)-RuvC(2) complex forms which resolves the HJ.

The protein resides in the cytoplasm. It catalyses the reaction ATP + H2O = ADP + phosphate + H(+). Its function is as follows. The RuvA-RuvB-RuvC complex processes Holliday junction (HJ) DNA during genetic recombination and DNA repair, while the RuvA-RuvB complex plays an important role in the rescue of blocked DNA replication forks via replication fork reversal (RFR). RuvA specifically binds to HJ cruciform DNA, conferring on it an open structure. The RuvB hexamer acts as an ATP-dependent pump, pulling dsDNA into and through the RuvAB complex. RuvB forms 2 homohexamers on either side of HJ DNA bound by 1 or 2 RuvA tetramers; 4 subunits per hexamer contact DNA at a time. Coordinated motions by a converter formed by DNA-disengaged RuvB subunits stimulates ATP hydrolysis and nucleotide exchange. Immobilization of the converter enables RuvB to convert the ATP-contained energy into a lever motion, pulling 2 nucleotides of DNA out of the RuvA tetramer per ATP hydrolyzed, thus driving DNA branch migration. The RuvB motors rotate together with the DNA substrate, which together with the progressing nucleotide cycle form the mechanistic basis for DNA recombination by continuous HJ branch migration. Branch migration allows RuvC to scan DNA until it finds its consensus sequence, where it cleaves and resolves cruciform DNA. The sequence is that of Holliday junction branch migration complex subunit RuvB from Staphylococcus carnosus (strain TM300).